A 178-amino-acid chain; its full sequence is Inorganic pyrophosphatase (178 aa).

Residues Lys-30, Arg-44, and Tyr-56 each contribute to the substrate site. Residues Asp-66, Asp-71, and Asp-103 each contribute to the Mg(2+) site. Tyr-140 provides a ligand contact to substrate.

Belongs to the PPase family. As to quaternary structure, homohexamer. Requires Mg(2+) as cofactor.

The protein resides in the cytoplasm. It catalyses the reaction diphosphate + H2O = 2 phosphate + H(+). Catalyzes the hydrolysis of inorganic pyrophosphate (PPi) forming two phosphate ions. This chain is Inorganic pyrophosphatase, found in Thermococcus kodakarensis (strain ATCC BAA-918 / JCM 12380 / KOD1) (Pyrococcus kodakaraensis (strain KOD1)).